The sequence spans 257 residues: Snake venom serine protease nikobin (257 aa).

Positions 1–18 (MVLIRVLANLLLLQLSYA) are cleaved as a signal peptide. The propeptide occupies 19-24 (QKSSEL). The Peptidase S1 domain occupies 25–248 (VIGGDECNIN…YSDWIQSIIA (224 aa)). Cystine bridges form between Cys-31–Cys-162, Cys-49–Cys-65, Cys-97–Cys-255, Cys-141–Cys-209, Cys-173–Cys-188, and Cys-199–Cys-224. Active-site charge relay system residues include His-64 and Asp-109. N-linked (GlcNAc...) asparagine glycosylation is found at Asn-120 and Asn-121. Ser-203 (charge relay system) is an active-site residue. Asn-250 carries an N-linked (GlcNAc...) asparagine glycan.

It belongs to the peptidase S1 family. Snake venom subfamily. Monomer. As to expression, expressed by the venom gland.

The protein localises to the secreted. Its function is as follows. Snake venom serine protease that may act in the hemostasis system of the prey. This chain is Snake venom serine protease nikobin (sp-VN), found in Vipera nikolskii (Nikolsky's adder).